The following is a 421-amino-acid chain: MKFAIESVSKCSGRLGTLNVKNAFSNVSISTPALVLHAKGGSIPFLSREVLQYLTAETPIMQHSLTNTDHMEEAVRACDEGISSFVGHKESISLLVLKDPAEQCKPSFHEKDFVPIFSRSGRKNFTSERYMQLVEAFKPTVFVPLFDGDTDLESSKKRLQKSLDRTEKFVEQCVEAHRKSANLKESNLIGPVVGGYNLKLRSASVKFLEQFKNDLEGYMIAGLHSNGLSATELKESNLVEVVSHTCQSLPTDKVRFMFGAFSPRIILKLVAQGIDVFDTSFAYLKTQQNRALTFSFDVNDKNVDSRETELDIRDPRWAEEFTGFVESCSCLACTKHTKAYAHHLYNTREMLAPIILMMHNLHHYFEFFKAIRKHVSEDTLDQLVEHLQKQKDVPLFDEKSVDVTKADPMDFRDSATKKLKV.

Zn(2+)-binding residues include cysteine 328, cysteine 330, cysteine 333, and histidine 359.

Belongs to the queuine tRNA-ribosyltransferase family. QTRT2 subfamily. As to quaternary structure, heterodimer of a catalytic subunit and an accessory subunit. The cofactor is Zn(2+).

Its subcellular location is the cytoplasm. Non-catalytic subunit of the queuine tRNA-ribosyltransferase (TGT) that catalyzes the base-exchange of a guanine (G) residue with queuine (Q) at position 34 (anticodon wobble position) in tRNAs with GU(N) anticodons (tRNA-Asp, -Asn, -His and -Tyr), resulting in the hypermodified nucleoside queuosine (7-(((4,5-cis-dihydroxy-2-cyclopenten-1-yl)amino)methyl)-7-deazaguanosine). This chain is Queuine tRNA-ribosyltransferase accessory subunit 2, found in Aedes aegypti (Yellowfever mosquito).